We begin with the raw amino-acid sequence, 60 residues long: MKVTCVLTLAVLILTIGQIANADSTLGQRYCKASGSWCGIHKHRECCSGNCFFWCVYNGK.

The signal sequence occupies residues 1 to 22 (MKVTCVLTLAVLILTIGQIANA). Intrachain disulfides connect cysteine 31–cysteine 47, cysteine 38–cysteine 51, and cysteine 46–cysteine 55.

Expressed by the venom duct.

The protein resides in the secreted. Probable neurotoxin. This Californiconus californicus (California cone) protein is Conotoxin Cal6.30.